The primary structure comprises 450 residues: Tubulin beta chain (450 aa).

E69, S138, G142, T143, G144, N204, and N226 together coordinate GTP. E69 is a binding site for Mg(2+). The segment at 427–450 (DATIDQEFEDEEEVEEQNDDSDEQ) is disordered. Over residues 430 to 450 (IDQEFEDEEEVEEQNDDSDEQ) the composition is skewed to acidic residues.

Belongs to the tubulin family. As to quaternary structure, dimer of alpha and beta chains. A typical microtubule is a hollow water-filled tube with an outer diameter of 25 nm and an inner diameter of 15 nM. Alpha-beta heterodimers associate head-to-tail to form protofilaments running lengthwise along the microtubule wall with the beta-tubulin subunit facing the microtubule plus end conferring a structural polarity. Microtubules usually have 13 protofilaments but different protofilament numbers can be found in some organisms and specialized cells. It depends on Mg(2+) as a cofactor.

Its subcellular location is the cytoplasm. The protein localises to the cytoskeleton. Its function is as follows. Tubulin is the major constituent of microtubules, a cylinder consisting of laterally associated linear protofilaments composed of alpha- and beta-tubulin heterodimers. Microtubules grow by the addition of GTP-tubulin dimers to the microtubule end, where a stabilizing cap forms. Below the cap, tubulin dimers are in GDP-bound state, owing to GTPase activity of alpha-tubulin. In Bombyx mori (Silk moth), this protein is Tubulin beta chain.